The chain runs to 159 residues: uncharacterized protein (159 aa).

3 helical membrane-spanning segments follow: residues 17–37 (FFFF…NLSS), 44–64 (WLIV…PLPI), and 67–87 (FSGA…DLIA).

It is found in the membrane. This is an uncharacterized protein from Saccharomyces cerevisiae (strain ATCC 204508 / S288c) (Baker's yeast).